A 325-amino-acid polypeptide reads, in one-letter code: uncharacterized protein (325 aa).

Disordered regions lie at residues 32-65 (LSTPVYRKKSRRSVSQSRPTSIIEPPKRSIVPPI) and 99-152 (GDSL…ASSG). The Globin domain maps to 153 to 291 (LVPSLNRLRI…LFTGVRDGYY (139 aa)).

This is an uncharacterized protein from Caenorhabditis elegans.